Here is a 182-residue protein sequence, read N- to C-terminus: Crossover junction endodeoxyribonuclease RuvC (182 aa).

Active-site residues include aspartate 7, glutamate 67, and aspartate 139. Mg(2+) is bound by residues aspartate 7, glutamate 67, and aspartate 139.

Belongs to the RuvC family. In terms of assembly, homodimer which binds Holliday junction (HJ) DNA. The HJ becomes 2-fold symmetrical on binding to RuvC with unstacked arms; it has a different conformation from HJ DNA in complex with RuvA. In the full resolvosome a probable DNA-RuvA(4)-RuvB(12)-RuvC(2) complex forms which resolves the HJ. Requires Mg(2+) as cofactor.

The protein localises to the cytoplasm. It carries out the reaction Endonucleolytic cleavage at a junction such as a reciprocal single-stranded crossover between two homologous DNA duplexes (Holliday junction).. Functionally, the RuvA-RuvB-RuvC complex processes Holliday junction (HJ) DNA during genetic recombination and DNA repair. Endonuclease that resolves HJ intermediates. Cleaves cruciform DNA by making single-stranded nicks across the HJ at symmetrical positions within the homologous arms, yielding a 5'-phosphate and a 3'-hydroxyl group; requires a central core of homology in the junction. The consensus cleavage sequence is 5'-(A/T)TT(C/G)-3'. Cleavage occurs on the 3'-side of the TT dinucleotide at the point of strand exchange. HJ branch migration catalyzed by RuvA-RuvB allows RuvC to scan DNA until it finds its consensus sequence, where it cleaves and resolves the cruciform DNA. The sequence is that of Crossover junction endodeoxyribonuclease RuvC from Bordetella parapertussis (strain 12822 / ATCC BAA-587 / NCTC 13253).